Here is a 292-residue protein sequence, read N- to C-terminus: Putative rRNA 2'-O-methyltransferase fibrillarin 3 (292 aa).

The interval 1 to 58 is disordered; the sequence is MKPPQRGRGGGVRGGRGLARGGEGSAVRGSGRGGESGRGRGPGRVKSESDGGIKGGSK. Gly residues predominate over residues 7 to 42; the sequence is GRGGGVRGGRGLARGGEGSAVRGSGRGGESGRGRGP. S-adenosyl-L-methionine contacts are provided by residues 146–147, 165–166, 190–191, and 210–213; these read YT, EH, DA, and DVNH.

Belongs to the methyltransferase superfamily. Fibrillarin family. As to quaternary structure, component of box C/D small nucleolar ribonucleoprotein (snoRNP) particles. Not detectable by RT-PCR.

It localises to the nucleus. The protein localises to the nucleolus. It carries out the reaction L-glutaminyl-[histone H2A] + S-adenosyl-L-methionine = N(5)-methyl-L-glutaminyl-[histone H2A] + S-adenosyl-L-homocysteine + H(+). Functionally, S-adenosyl-L-methionine-dependent methyltransferase that has the ability to methylate both RNAs and proteins. Involved in pre-rRNA processing. Utilizes the methyl donor S-adenosyl-L-methionine to catalyze the site-specific 2'-hydroxyl methylation of ribose moieties in pre-ribosomal RNA. Site specificity is provided by a guide RNA that base pairs with the substrate. Methylation occurs at a characteristic distance from the sequence involved in base pairing with the guide RNA. Also acts as a protein methyltransferase by mediating methylation of 'Gln-105' of histone H2A (H2AQ105me), a modification that impairs binding of the FACT complex and is specifically present at 35S ribosomal DNA locus. This chain is Putative rRNA 2'-O-methyltransferase fibrillarin 3 (FIB3), found in Arabidopsis thaliana (Mouse-ear cress).